Reading from the N-terminus, the 163-residue chain is Ribosome maturation factor RimM (163 aa).

The PRC barrel domain occupies 92–161 (PGEYYHHDLI…AETVTVNAAF (70 aa)).

It belongs to the RimM family. In terms of assembly, binds ribosomal protein uS19.

Its subcellular location is the cytoplasm. In terms of biological role, an accessory protein needed during the final step in the assembly of 30S ribosomal subunit, possibly for assembly of the head region. Essential for efficient processing of 16S rRNA. May be needed both before and after RbfA during the maturation of 16S rRNA. It has affinity for free ribosomal 30S subunits but not for 70S ribosomes. The chain is Ribosome maturation factor RimM from Sphingopyxis alaskensis (strain DSM 13593 / LMG 18877 / RB2256) (Sphingomonas alaskensis).